Here is a 114-residue protein sequence, read N- to C-terminus: DNA-directed RNA polymerases II, IV and V subunit 9A (114 aa).

Positions 7, 10, 29, 32, 76, 79, 103, and 108 each coordinate Zn(2+). The TFIIS-type zinc finger occupies 72–113; the sequence is KAVRCSKCQHREAVFFQATARGEEGMTLFFVCCNPNCGHRWR.

Belongs to the archaeal RpoM/eukaryotic RPA12/RPB9/RPC11 RNA polymerase family. Component of the RNA polymerase II, IV and V complexes. Interacts with NRPD1.

The protein localises to the nucleus. The protein resides in the nucleolus. Its function is as follows. DNA-dependent RNA polymerase catalyzes the transcription of DNA into RNA using the four ribonucleoside triphosphates as substrates. Component of RNA polymerase II which synthesizes mRNA precursors and many functional non-coding RNAs. Pol II is the central component of the basal RNA polymerase II transcription machinery. It is composed of mobile elements that move relative to each other. Component of RNA polymerases IV and V which mediate short-interfering RNAs (siRNA) accumulation and subsequent RNA-directed DNA methylation-dependent (RdDM) transcriptional gene silencing (TGS) of endogenous repeated sequences, including transposable elements. Required for RNA silencing. In Arabidopsis thaliana (Mouse-ear cress), this protein is DNA-directed RNA polymerases II, IV and V subunit 9A (NRPB9A).